The chain runs to 175 residues: Large ribosomal subunit protein bL17m (175 aa).

Residues 1 to 8 constitute a mitochondrion transit peptide; the sequence is MRLSVAAA. The tract at residues 155–175 is disordered; that stretch reads DLRQSQEASNHSSHTAQTPGI. Residues 161-175 are compositionally biased toward polar residues; sequence EASNHSSHTAQTPGI.

This sequence belongs to the bacterial ribosomal protein bL17 family. As to quaternary structure, component of the mitochondrial large ribosomal subunit (mt-LSU). Mature mammalian 55S mitochondrial ribosomes consist of a small (28S) and a large (39S) subunit. The 28S small subunit contains a 12S ribosomal RNA (12S mt-rRNA) and 30 different proteins. The 39S large subunit contains a 16S rRNA (16S mt-rRNA), a copy of mitochondrial valine transfer RNA (mt-tRNA(Val)), which plays an integral structural role, and 52 different proteins. In terms of tissue distribution, detected in adrenal gland, mammary gland and adipose tissue.

The protein resides in the mitochondrion. The protein is Large ribosomal subunit protein bL17m (MRPL17) of Homo sapiens (Human).